The following is a 483-amino-acid chain: Islet cell autoantigen 1 (483 aa).

The region spanning 51–254 (ASDADLDAKL…TSHTMAAIHE (204 aa)) is the AH domain. The segment at 281 to 321 (EEKKKINQQESTDAAVQEPSQLISLEEENQRKESSSFKTED) is disordered. Over residues 288 to 303 (QQESTDAAVQEPSQLI) the composition is skewed to polar residues. The span at 308–321 (ENQRKESSSFKTED) shows a compositional bias: basic and acidic residues.

In terms of tissue distribution, expressed abundantly in pancreas, heart and brain with low levels of expression in lung, kidney, liver and thyroid.

It is found in the cytoplasm. It localises to the cytosol. The protein localises to the golgi apparatus membrane. Its subcellular location is the cytoplasmic vesicle. The protein resides in the secretory vesicle membrane. It is found in the secretory vesicle. It localises to the synaptic vesicle membrane. Functionally, may play a role in neurotransmitter secretion. The chain is Islet cell autoantigen 1 (ICA1) from Homo sapiens (Human).